The primary structure comprises 392 residues: Protein NolC (392 aa).

One can recognise a J domain in the interval 2–71 (KRDLYETLGV…RAAYDRYGHA (70 aa)). Disordered regions lie at residues 103-142 (RRDDGRRSSAPLLGRSRTRCGPSLQHGDHPRGGLFRQDGA) and 157-244 (LGRE…TGLR). Residues 157–170 (LGREAGHQPEDLRH) show a composition bias toward basic and acidic residues. Positions 171-185 (LPGLRPYPRRPGLLL) are enriched in low complexity. Positions 186-203 (DRTHLPDLRRSRSDDHRS) are enriched in basic and acidic residues. Positions 227 to 241 (HRGRHAYPPLRRGRT) are enriched in basic residues.

The sequence is that of Protein NolC (nolC) from Rhizobium fredii (Sinorhizobium fredii).